The chain runs to 273 residues: ATP synthase subunit a (273 aa).

5 helical membrane-spanning segments follow: residues 42–62 (TLNI…LFIF), 102–122 (VIAP…MMDL), 148–168 (DVSI…FYSI), 213–233 (LFGN…LLPW), and 244–264 (AIFH…LTIV).

The protein belongs to the ATPase A chain family. As to quaternary structure, F-type ATPases have 2 components, CF(1) - the catalytic core - and CF(0) - the membrane proton channel. CF(1) has five subunits: alpha(3), beta(3), gamma(1), delta(1), epsilon(1). CF(0) has three main subunits: a(1), b(2) and c(9-12). The alpha and beta chains form an alternating ring which encloses part of the gamma chain. CF(1) is attached to CF(0) by a central stalk formed by the gamma and epsilon chains, while a peripheral stalk is formed by the delta and b chains.

The protein resides in the cell inner membrane. Functionally, key component of the proton channel; it plays a direct role in the translocation of protons across the membrane. This is ATP synthase subunit a from Serratia proteamaculans (strain 568).